A 372-amino-acid polypeptide reads, in one-letter code: Chemerin-like receptor 1 (372 aa).

The Extracellular portion of the chain corresponds to 1 to 39; sequence MEYEGYNDSSIYGEEYSDGSDYIVDLEEAGPLEAKVAEV. Residue Asn-7 is glycosylated (N-linked (GlcNAc...) asparagine). The chain crosses the membrane as a helical span at residues 40–62; the sequence is FLVVIYSLVCFLGILGNGLVIVI. Residues 63 to 73 lie on the Cytoplasmic side of the membrane; it reads ATFKMKKTVNT. Residues 74-95 form a helical membrane-spanning segment; the sequence is VWFVNLAVADFLFNIFLPIHIT. Topologically, residues 96 to 112 are extracellular; that stretch reads YAAMDYHWVFGKAMCKI. A disulfide bond links Cys-110 and Cys-188. The helical transmembrane segment at 113–133 threads the bilayer; it reads SSFLLSHNMYTSVFLLTVISF. The Cytoplasmic portion of the chain corresponds to 134 to 152; sequence DRCISVLLPVWSQNHRSVR. The helical transmembrane segment at 153 to 174 threads the bilayer; that stretch reads LAYMTCVVVWVLAFFLSSPSLV. Residues 175-223 lie on the Extracellular side of the membrane; the sequence is FRDTVSTSHGKITCFNNFSLAAPEPFSHSTHPRTDPVGYSRHVAVTVTR. Asn-191 carries an N-linked (GlcNAc...) asparagine glycan. Residues 224–244 traverse the membrane as a helical segment; that stretch reads FLCGFLIPVFIITACYLTIVF. Topologically, residues 245–260 are cytoplasmic; that stretch reads KLQRNRLAKTKKPFKI. A helical membrane pass occupies residues 261–281; it reads IITIIITFFLCWCPYHTLYLL. At 282 to 299 the chain is on the extracellular side; that stretch reads ELHHTAVPASVFSLGLPL. A helical transmembrane segment spans residues 300-319; sequence ATAVAIANSCMNPILYVFMG. The Cytoplasmic segment spans residues 320–372; that stretch reads HDFKKFKVALFSRLVNALSEDTGPSSYPSHRSFTKMSSLIEKASVNEKETSTL. Ser-338 carries the phosphoserine modification. Thr-341 is modified (phosphothreonine). Ser-348, Ser-351, and Ser-357 each carry phosphoserine. Phosphothreonine is present on Thr-371.

It belongs to the chemokine-like receptor (CMKLR) family. High expression in heart and lung, low in small intestines, colon, kidney, liver, uterus and brain.

The protein localises to the cell membrane. Functionally, receptor for the chemoattractant adipokine chemerin/RARRES2 and for the omega-3 fatty acid derived molecule resolvin E1. Interaction with RARRES2 initiates activation of G proteins G(i)/G(o) and beta-arrestin pathways inducing cellular responses via second messenger pathways such as intracellular calcium mobilization, phosphorylation of MAP kinases MAPK1/MAPK3 (ERK1/2), TYRO3, MAPK14/P38MAPK and PI3K leading to multifunctional effects, like, reduction of immune responses, enhancing of adipogenesis and angionesis. Resolvin E1 down-regulates cytokine production in macrophages by reducing the activation of MAPK1/3 (ERK1/2) and NF-kappa-B. Positively regulates adipogenesis and adipocyte metabolism. In Rattus norvegicus (Rat), this protein is Chemerin-like receptor 1 (Cmklr1).